We begin with the raw amino-acid sequence, 199 residues long: 7-methyl-GTP pyrophosphatase (199 aa).

The active-site Proton acceptor is the Asp76.

This sequence belongs to the Maf family. YceF subfamily. A divalent metal cation is required as a cofactor.

Its subcellular location is the cytoplasm. It carries out the reaction N(7)-methyl-GTP + H2O = N(7)-methyl-GMP + diphosphate + H(+). Its function is as follows. Nucleoside triphosphate pyrophosphatase that hydrolyzes 7-methyl-GTP (m(7)GTP). May have a dual role in cell division arrest and in preventing the incorporation of modified nucleotides into cellular nucleic acids. In Rhizobium johnstonii (strain DSM 114642 / LMG 32736 / 3841) (Rhizobium leguminosarum bv. viciae), this protein is 7-methyl-GTP pyrophosphatase.